The following is a 179-amino-acid chain: Large ribosomal subunit protein uL5 (179 aa).

This sequence belongs to the universal ribosomal protein uL5 family. In terms of assembly, part of the 50S ribosomal subunit; part of the 5S rRNA/L5/L18/L25 subcomplex. Contacts the 5S rRNA and the P site tRNA. Forms a bridge to the 30S subunit in the 70S ribosome.

Functionally, this is one of the proteins that bind and probably mediate the attachment of the 5S RNA into the large ribosomal subunit, where it forms part of the central protuberance. In the 70S ribosome it contacts protein S13 of the 30S subunit (bridge B1b), connecting the 2 subunits; this bridge is implicated in subunit movement. Contacts the P site tRNA; the 5S rRNA and some of its associated proteins might help stabilize positioning of ribosome-bound tRNAs. The polypeptide is Large ribosomal subunit protein uL5 (Francisella tularensis subsp. novicida (strain U112)).